We begin with the raw amino-acid sequence, 244 residues long: 1-(5-phosphoribosyl)-5-[(5-phosphoribosylamino)methylideneamino] imidazole-4-carboxamide isomerase (244 aa).

Asp-10 acts as the Proton acceptor in catalysis. Asp-132 functions as the Proton donor in the catalytic mechanism.

Belongs to the HisA/HisF family.

The protein resides in the cytoplasm. The enzyme catalyses 1-(5-phospho-beta-D-ribosyl)-5-[(5-phospho-beta-D-ribosylamino)methylideneamino]imidazole-4-carboxamide = 5-[(5-phospho-1-deoxy-D-ribulos-1-ylimino)methylamino]-1-(5-phospho-beta-D-ribosyl)imidazole-4-carboxamide. The protein operates within amino-acid biosynthesis; L-histidine biosynthesis; L-histidine from 5-phospho-alpha-D-ribose 1-diphosphate: step 4/9. This is 1-(5-phosphoribosyl)-5-[(5-phosphoribosylamino)methylideneamino] imidazole-4-carboxamide isomerase from Stenotrophomonas maltophilia (strain R551-3).